A 116-amino-acid polypeptide reads, in one-letter code: MKLAIGRLLSPLFLKNPQKPLIITKRFYSTPGERRIKDILTEKLSPSSLRVIDVSGGCGSMYQVAIKSKAFQGKNTLAQHRLVNSILKEEIRNMHGLNLSTEVEDDISAGGSTTSS.

It belongs to the BolA/IbaG family.

The protein resides in the mitochondrion. This is an uncharacterized protein from Schizosaccharomyces pombe (strain 972 / ATCC 24843) (Fission yeast).